The chain runs to 372 residues: Glutamate 5-kinase (372 aa).

K14 contacts ATP. The substrate site is built by S54, D141, and N153. 173 to 174 (TD) provides a ligand contact to ATP. The 79-residue stretch at 280-358 (AGRIVLDQGA…TDILSILGFV (79 aa)) folds into the PUA domain.

This sequence belongs to the glutamate 5-kinase family.

Its subcellular location is the cytoplasm. It carries out the reaction L-glutamate + ATP = L-glutamyl 5-phosphate + ADP. It participates in amino-acid biosynthesis; L-proline biosynthesis; L-glutamate 5-semialdehyde from L-glutamate: step 1/2. Its function is as follows. Catalyzes the transfer of a phosphate group to glutamate to form L-glutamate 5-phosphate. This Herminiimonas arsenicoxydans protein is Glutamate 5-kinase.